The primary structure comprises 586 residues: CTP synthase (586 aa).

The segment at 1–278 (MRKHPQTATK…DAFVVRRLNL (278 aa)) is amidoligase domain. Residue S20 participates in CTP binding. S20 is a binding site for UTP. Residues 21–26 (SLGKGL) and D78 contribute to the ATP site. Positions 78 and 152 each coordinate Mg(2+). CTP contacts are provided by residues 159–161 (DIE), 199–204 (KTKPTQ), and K235. Residues 199-204 (KTKPTQ) and K235 contribute to the UTP site. The 249-residue stretch at 303–551 (RIALVGKYVE…VGAAIDYKAG (249 aa)) folds into the Glutamine amidotransferase type-1 domain. An L-glutamine-binding site is contributed by G366. C393 (nucleophile; for glutamine hydrolysis) is an active-site residue. Residues 394–397 (LGLQ), E416, and R477 each bind L-glutamine. Catalysis depends on residues H524 and E526. The segment at 560–586 (EIPEHTPNGSSHRDGVGQPLPEPASRG) is disordered.

The protein belongs to the CTP synthase family. In terms of assembly, homotetramer.

It catalyses the reaction UTP + L-glutamine + ATP + H2O = CTP + L-glutamate + ADP + phosphate + 2 H(+). It carries out the reaction L-glutamine + H2O = L-glutamate + NH4(+). The catalysed reaction is UTP + NH4(+) + ATP = CTP + ADP + phosphate + 2 H(+). Its pathway is pyrimidine metabolism; CTP biosynthesis via de novo pathway; CTP from UDP: step 2/2. Allosterically activated by GTP, when glutamine is the substrate; GTP has no effect on the reaction when ammonia is the substrate. The allosteric effector GTP functions by stabilizing the protein conformation that binds the tetrahedral intermediate(s) formed during glutamine hydrolysis. Inhibited by the product CTP, via allosteric rather than competitive inhibition. Its function is as follows. Catalyzes the ATP-dependent amination of UTP to CTP with either L-glutamine or ammonia as the source of nitrogen. Regulates intracellular CTP levels through interactions with the four ribonucleotide triphosphates. The chain is CTP synthase from Mycobacterium tuberculosis (strain ATCC 25177 / H37Ra).